Reading from the N-terminus, the 742-residue chain is Conserved oligomeric Golgi complex subunit 6 (742 aa).

The disordered stretch occupies residues 692 to 742 (VGEDWELEEDTEEKSMKQKEQQDEDTEDQGEKGIMQEEHKAQDAGNTEDKA). Acidic residues predominate over residues 694–703 (EDWELEEDTE). Basic and acidic residues predominate over residues 720 to 742 (QGEKGIMQEEHKAQDAGNTEDKA).

It belongs to the COG6 family.

The protein resides in the golgi apparatus membrane. Its function is as follows. Acts as a component of the peripheral membrane COG complex that is involved in intra-Golgi protein trafficking. COG is located at the cis-Golgi, and regulates tethering of retrograde intra-Golgi vesicles and possibly a number of other membrane trafficking events. The protein is Conserved oligomeric Golgi complex subunit 6 (COG6) of Cryptococcus neoformans var. neoformans serotype D (strain JEC21 / ATCC MYA-565) (Filobasidiella neoformans).